The chain runs to 257 residues: Ditrans,polycis-undecaprenyl-diphosphate synthase ((2E,6E)-farnesyl-diphosphate specific) (257 aa).

Residue D34 is part of the active site. Mg(2+) is bound at residue D34. Residues G35–R38, W39, R47, and H51 contribute to the substrate site. Residue N82 is the Proton acceptor of the active site. Substrate-binding positions include W83, R85, R201, and R207 to S209. E220 contributes to the Mg(2+) binding site.

The protein belongs to the UPP synthase family. In terms of assembly, homodimer. It depends on Mg(2+) as a cofactor.

The enzyme catalyses 8 isopentenyl diphosphate + (2E,6E)-farnesyl diphosphate = di-trans,octa-cis-undecaprenyl diphosphate + 8 diphosphate. Its function is as follows. Catalyzes the sequential condensation of isopentenyl diphosphate (IPP) with (2E,6E)-farnesyl diphosphate (E,E-FPP) to yield (2Z,6Z,10Z,14Z,18Z,22Z,26Z,30Z,34E,38E)-undecaprenyl diphosphate (di-trans,octa-cis-UPP). UPP is the precursor of glycosyl carrier lipid in the biosynthesis of bacterial cell wall polysaccharide components such as peptidoglycan and lipopolysaccharide. The chain is Ditrans,polycis-undecaprenyl-diphosphate synthase ((2E,6E)-farnesyl-diphosphate specific) from Francisella tularensis subsp. tularensis (strain SCHU S4 / Schu 4).